We begin with the raw amino-acid sequence, 362 residues long: uncharacterized protein (362 aa).

Belongs to the carbohydrate kinase PfkB family.

This is an uncharacterized protein from Escherichia coli (strain K12).